A 462-amino-acid chain; its full sequence is Nitrate/nitrite transporter NarU (462 aa).

Residues 1–35 (MALQNEKNSRYLLRDWKPENPAFWENKGKHIARRN) lie on the Cytoplasmic side of the membrane. Residues 36-56 (LWISVSCLLLAFCVWMLFSAV) form a helical membrane-spanning segment. At 57-76 (TVNLNKIGFNFTTDQLFLLT) the chain is on the periplasmic side. Residues 77-97 (ALPSVSGALLRVPYSFMVPIF) traverse the membrane as a helical segment. Residues 98–101 (GGRR) lie on the Cytoplasmic side of the membrane. A helical transmembrane segment spans residues 102–122 (WTVFSTAILIIPCVWLGIAVQ). Over 123–125 (NPN) the chain is Periplasmic. A helical membrane pass occupies residues 126–146 (TPFGIFIVIALLCGFAGANFA). Residues 147–180 (SSMGNISFFFPKAKQGSALGINGGLGNLGVSVMQ) lie on the Cytoplasmic side of the membrane. A helical transmembrane segment spans residues 181–201 (LVAPLVIFVPVFAFLGVNGVP). The Periplasmic portion of the chain corresponds to 202 to 206 (QADGS). Residues 207 to 227 (VMSLANAAWIWVPLLAIATIA) form a helical membrane-spanning segment. At 228–258 (AWSGMNDIASSRASIADQLPVLQRLHLWLLS) the chain is on the cytoplasmic side. Residues 259–279 (LLYLATFGSFIGFSAGFAMLA) form a helical membrane-spanning segment. Residues 280-287 (KTQFPDVN) lie on the Periplasmic side of the membrane. Residues 288–308 (ILRLAFFGPFIGAIARSVGGA) traverse the membrane as a helical segment. Topologically, residues 309–317 (ISDKFGGVR) are cytoplasmic. A helical membrane pass occupies residues 318–338 (VTLINFIFMAIFSALLFLTLP). At 339-344 (GTGSGN) the chain is on the periplasmic side. A helical membrane pass occupies residues 345–365 (FIAFYAVFMGLFLTAGLGSGS). Over 366-401 (TFQMIAVIFRQITIYRVKMKGGSDEQAHKEAVTETA) the chain is Cytoplasmic. A helical membrane pass occupies residues 402–422 (AALGFISAIGAVGGFFIPQAF). The Periplasmic segment spans residues 423 to 432 (GMSLNMTGSP). The chain crosses the membrane as a helical span at residues 433 to 453 (VGAMKVFLIFYIVCVLLTWLV). The Cytoplasmic portion of the chain corresponds to 454 to 462 (YGRRKFSQK).

It belongs to the major facilitator superfamily. Nitrate/nitrite porter (TC 2.A.1.8) family.

Its subcellular location is the cell inner membrane. In terms of biological role, catalyzes nitrate uptake, nitrite uptake and nitrite export across the cytoplasmic membrane. May function as a nitrate/H(+) and nitrite/H(+) channel. Could confer a selective advantage during severe nutrient starvation or slow growth. In Escherichia coli (strain K12), this protein is Nitrate/nitrite transporter NarU (narU).